A 119-amino-acid chain; its full sequence is MIVGIGIDIIELNRIEKMIDGKLKFMERILTESERNVAKGLKGSRLTEFVAGRFAAKEAYSKAVGTGIGKEVSFLDIEVRNDDRGKPILITSTEHIVHLSISHSKEFAVAQVVLESSSR.

Mg(2+) is bound by residues aspartate 8 and glutamate 58.

This sequence belongs to the P-Pant transferase superfamily. AcpS family. The cofactor is Mg(2+).

Its subcellular location is the cytoplasm. The enzyme catalyses apo-[ACP] + CoA = holo-[ACP] + adenosine 3',5'-bisphosphate + H(+). Its function is as follows. Transfers the 4'-phosphopantetheine moiety from coenzyme A to a Ser of acyl-carrier-protein. The chain is Holo-[acyl-carrier-protein] synthase from Bacillus cereus (strain ATCC 10987 / NRS 248).